Reading from the N-terminus, the 514-residue chain is ATP synthase subunit alpha (514 aa).

170 to 177 (GDRQIGKT) serves as a coordination point for ATP.

Belongs to the ATPase alpha/beta chains family. As to quaternary structure, F-type ATPases have 2 components, CF(1) - the catalytic core - and CF(0) - the membrane proton channel. CF(1) has five subunits: alpha(3), beta(3), gamma(1), delta(1), epsilon(1). CF(0) has three main subunits: a(1), b(2) and c(9-12). The alpha and beta chains form an alternating ring which encloses part of the gamma chain. CF(1) is attached to CF(0) by a central stalk formed by the gamma and epsilon chains, while a peripheral stalk is formed by the delta and b chains.

It is found in the cell inner membrane. The enzyme catalyses ATP + H2O + 4 H(+)(in) = ADP + phosphate + 5 H(+)(out). Produces ATP from ADP in the presence of a proton gradient across the membrane. The alpha chain is a regulatory subunit. This Marinobacter nauticus (strain ATCC 700491 / DSM 11845 / VT8) (Marinobacter aquaeolei) protein is ATP synthase subunit alpha.